We begin with the raw amino-acid sequence, 122 residues long: Biogenesis of lysosome-related organelles complex 1 subunit CNL1 (122 aa).

Over residues 1–10 (MQDNSSHSRE) the composition is skewed to basic and acidic residues. The disordered stretch occupies residues 1–21 (MQDNSSHSRESASAGDDPLGI). Residues 63 to 95 (ENTIDKNIAKFKELLEKCDTLENHYEMLNQLAI) adopt a coiled-coil conformation.

Belongs to the BLOC1S4 family. In terms of assembly, component of the biogenesis of lysosome-related organelles complex-1 (BLOC-1) composed of at least BLI1, BLS1, CNL1, KXD1, SNN1 and VAB2.

It is found in the cytoplasm. Its function is as follows. Component of the biogenesis of lysosome-related organelles complex-1 (BLOC-1), a complex that is involved in endosomal cargo sorting. This chain is Biogenesis of lysosome-related organelles complex 1 subunit CNL1 (CLN1), found in Saccharomyces cerevisiae (strain Lalvin QA23) (Baker's yeast).